The chain runs to 281 residues: Diaminopimelate epimerase (281 aa).

Substrate contacts are provided by Asn13 and Asn66. The active-site Proton donor is Cys75. Residues 76–77, Asn164, Asn197, and 215–216 each bind substrate; these read GN and ER. Cys224 serves as the catalytic Proton acceptor. Residue 225 to 226 coordinates substrate; that stretch reads GT.

Belongs to the diaminopimelate epimerase family. In terms of assembly, homodimer.

It localises to the cytoplasm. It carries out the reaction (2S,6S)-2,6-diaminopimelate = meso-2,6-diaminopimelate. The protein operates within amino-acid biosynthesis; L-lysine biosynthesis via DAP pathway; DL-2,6-diaminopimelate from LL-2,6-diaminopimelate: step 1/1. Catalyzes the stereoinversion of LL-2,6-diaminopimelate (L,L-DAP) to meso-diaminopimelate (meso-DAP), a precursor of L-lysine and an essential component of the bacterial peptidoglycan. This is Diaminopimelate epimerase from Rippkaea orientalis (strain PCC 8801 / RF-1) (Cyanothece sp. (strain PCC 8801)).